Reading from the N-terminus, the 312-residue chain is Acetyl-coenzyme A carboxylase carboxyl transferase subunit alpha (312 aa).

In terms of domain architecture, CoA carboxyltransferase C-terminal spans 36 to 286 (RLDKEVKSIY…KEYFLDALRT (251 aa)).

The protein belongs to the AccA family. Acetyl-CoA carboxylase is a heterohexamer composed of biotin carboxyl carrier protein (AccB), biotin carboxylase (AccC) and two subunits each of ACCase subunit alpha (AccA) and ACCase subunit beta (AccD).

The protein localises to the cytoplasm. The catalysed reaction is N(6)-carboxybiotinyl-L-lysyl-[protein] + acetyl-CoA = N(6)-biotinyl-L-lysyl-[protein] + malonyl-CoA. It functions in the pathway lipid metabolism; malonyl-CoA biosynthesis; malonyl-CoA from acetyl-CoA: step 1/1. Its function is as follows. Component of the acetyl coenzyme A carboxylase (ACC) complex. First, biotin carboxylase catalyzes the carboxylation of biotin on its carrier protein (BCCP) and then the CO(2) group is transferred by the carboxyltransferase to acetyl-CoA to form malonyl-CoA. This chain is Acetyl-coenzyme A carboxylase carboxyl transferase subunit alpha, found in Helicobacter pylori (strain Shi470).